The following is a 728-amino-acid chain: Propionyl-CoA carboxylase alpha chain, mitochondrial (728 aa).

The transit peptide at 1–52 directs the protein to the mitochondrion; that stretch reads MAGFWVGTAPLVAAGRRGRWPPQQLMLSAALRTLKHVLYYSRQCLMVSRNLG. A Biotin carboxylation domain is found at 62 to 509; it reads TFDKILVANR…STKFLSDVYP (448 aa). Lysine 65 is modified (N6-acetyllysine; alternate). Lysine 65 carries the N6-succinyllysine; alternate modification. Lysine 119 is modified (N6-succinyllysine). At lysine 150 the chain carries N6-acetyllysine; alternate. Residue lysine 150 is modified to N6-succinyllysine; alternate. Lysine 177 lines the ATP pocket. The 198-residue stretch at 181–378 folds into the ATP-grasp domain; sequence KLLAKKAEVN…LVQEMIRVAK (198 aa). At lysine 200 the chain carries N6-acetyllysine; alternate. An N6-succinyllysine; alternate modification is found at lysine 200. ATP-binding positions include 209–270, glutamate 261, and asparagine 296; that span reads AREI…PRHI. Residue serine 252 is modified to Phosphoserine. Lysine 262 carries the N6-succinyllysine modification. The residue at position 328 (lysine 328) is an N6-acetyllysine; alternate. Lysine 328 carries the post-translational modification N6-succinyllysine; alternate. Glutamate 336, glutamate 349, and asparagine 351 together coordinate Mg(2+). Positions 336, 349, and 351 each coordinate Mn(2+). Glutamate 349 is a catalytic residue. Lysine 385 and lysine 407 each carry N6-succinyllysine. Phenylalanine 409 is a binding site for biotin. The residue at position 496 (lysine 496) is an N6-acetyllysine. 3 positions are modified to N6-succinyllysine: lysine 502, lysine 513, and lysine 648. One can recognise a Biotinyl-binding domain in the interval 653–728; sequence KVTEDTSSVL…GEGDLLVELE (76 aa). An N6-biotinyllysine; by HLCS modification is found at lysine 694.

The holoenzyme is a dodecamer composed of 6 PCCA/alpha subunits and 6 PCCB/beta subunits. Interacts (via the biotin carboxylation domain) with SIRT4. Interacts with SIRT3 and SIRT5. The cofactor is Mg(2+). Mn(2+) is required as a cofactor. Biotin serves as cofactor. Acetylated. Post-translationally, the biotin cofactor is covalently attached to the C-terminal biotinyl-binding domain and is required for the catalytic activity. Biotinylation is catalyzed by HLCS.

It is found in the mitochondrion matrix. It catalyses the reaction propanoyl-CoA + hydrogencarbonate + ATP = (S)-methylmalonyl-CoA + ADP + phosphate + H(+). It carries out the reaction butanoyl-CoA + hydrogencarbonate + ATP = (2S)-ethylmalonyl-CoA + ADP + phosphate + H(+). It functions in the pathway metabolic intermediate metabolism; propanoyl-CoA degradation; succinyl-CoA from propanoyl-CoA: step 1/3. Its function is as follows. This is one of the 2 subunits of the biotin-dependent propionyl-CoA carboxylase (PCC), a mitochondrial enzyme involved in the catabolism of odd chain fatty acids, branched-chain amino acids isoleucine, threonine, methionine, and valine and other metabolites. Propionyl-CoA carboxylase catalyzes the carboxylation of propionyl-CoA/propanoyl-CoA to D-methylmalonyl-CoA/(S)-methylmalonyl-CoA. Within the holoenzyme, the alpha subunit catalyzes the ATP-dependent carboxylation of the biotin carried by the biotin carboxyl carrier (BCC) domain, while the beta subunit then transfers the carboxyl group from carboxylated biotin to propionyl-CoA. Propionyl-CoA carboxylase also significantly acts on butyryl-CoA/butanoyl-CoA, which is converted to ethylmalonyl-CoA/(2S)-ethylmalonyl-CoA at a much lower rate. Other alternative minor substrates include (2E)-butenoyl-CoA/crotonoyl-CoA. This is Propionyl-CoA carboxylase alpha chain, mitochondrial from Homo sapiens (Human).